The sequence spans 216 residues: Octanoyltransferase (216 aa).

The 176-residue stretch at 32–207 (ENSPDELWLV…TFSQLLGYEH (176 aa)) folds into the BPL/LPL catalytic domain. Residues 71–78 (RGGQVTYH), 138–140 (SLG), and 151–153 (GLA) each bind substrate. Cys-169 acts as the Acyl-thioester intermediate in catalysis.

It belongs to the LipB family.

It is found in the cytoplasm. It catalyses the reaction octanoyl-[ACP] + L-lysyl-[protein] = N(6)-octanoyl-L-lysyl-[protein] + holo-[ACP] + H(+). The protein operates within protein modification; protein lipoylation via endogenous pathway; protein N(6)-(lipoyl)lysine from octanoyl-[acyl-carrier-protein]: step 1/2. Its function is as follows. Catalyzes the transfer of endogenously produced octanoic acid from octanoyl-acyl-carrier-protein onto the lipoyl domains of lipoate-dependent enzymes. Lipoyl-ACP can also act as a substrate although octanoyl-ACP is likely to be the physiological substrate. This chain is Octanoyltransferase, found in Shewanella amazonensis (strain ATCC BAA-1098 / SB2B).